We begin with the raw amino-acid sequence, 257 residues long: Chymotrypsin-like protease VLCTLP (257 aa).

An N-terminal signal peptide occupies residues 1 to 18; it reads MVLIRVLANLLLLQLSYA. A propeptide spanning residues 19–24 is cleaved from the precursor; the sequence is QKSSEL. The Peptidase S1 domain occupies 25-248; it reads VVGGDECNIN…YSDWIQSIIA (224 aa). 6 disulfide bridges follow: cysteine 31–cysteine 162, cysteine 49–cysteine 65, cysteine 97–cysteine 255, cysteine 141–cysteine 209, cysteine 173–cysteine 188, and cysteine 199–cysteine 224. Asparagine 44 carries N-linked (GlcNAc...) asparagine glycosylation. Histidine 64 serves as the catalytic Charge relay system. A glycan (N-linked (GlcNAc...) asparagine) is linked at asparagine 100. The active-site Charge relay system is the aspartate 109. N-linked (GlcNAc...) asparagine glycans are attached at residues asparagine 116 and asparagine 153. Serine 203 serves as the catalytic Charge relay system. A glycan (N-linked (GlcNAc...) asparagine) is linked at asparagine 250.

It belongs to the peptidase S1 family. Snake venom subfamily. In terms of assembly, monomer. Post-translationally, partial deglycosylation has not effect on enzyme activity. As to expression, expressed by the venom gland.

It localises to the secreted. Inhibited by PMSF. Its function is as follows. Snake venom serine protease with tyrosine-specific chymotrypsin-like activity. Hydrolyzes the N-acetyl-L-tyrosine ethyl ester (ATEE). Has weak fibrinogenolytic activity. Weakly hydrolyzes azocasein, Aalpha-chain (FGA) and more slowly Bbeta-chain (FGB) of fibrinogen. Optimal substrates are angiotensins I and II (AGT). This is Chymotrypsin-like protease VLCTLP from Macrovipera lebetinus (Levantine viper).